The following is a 252-amino-acid chain: Imidazole glycerol phosphate synthase subunit HisF (252 aa).

Catalysis depends on residues D11 and D130.

It belongs to the HisA/HisF family. Heterodimer of HisH and HisF.

Its subcellular location is the cytoplasm. The catalysed reaction is 5-[(5-phospho-1-deoxy-D-ribulos-1-ylimino)methylamino]-1-(5-phospho-beta-D-ribosyl)imidazole-4-carboxamide + L-glutamine = D-erythro-1-(imidazol-4-yl)glycerol 3-phosphate + 5-amino-1-(5-phospho-beta-D-ribosyl)imidazole-4-carboxamide + L-glutamate + H(+). It functions in the pathway amino-acid biosynthesis; L-histidine biosynthesis; L-histidine from 5-phospho-alpha-D-ribose 1-diphosphate: step 5/9. IGPS catalyzes the conversion of PRFAR and glutamine to IGP, AICAR and glutamate. The HisF subunit catalyzes the cyclization activity that produces IGP and AICAR from PRFAR using the ammonia provided by the HisH subunit. The sequence is that of Imidazole glycerol phosphate synthase subunit HisF from Alkaliphilus metalliredigens (strain QYMF).